A 445-amino-acid polypeptide reads, in one-letter code: N-succinylarginine dihydrolase (445 aa).

Substrate contacts are provided by residues 19–28 (AGLSFGNVAS), N110, and 137–138 (HR). The active site involves E174. A substrate-binding site is contributed by R214. H250 is an active-site residue. Residues D252 and N363 each coordinate substrate. C369 (nucleophile) is an active-site residue.

It belongs to the succinylarginine dihydrolase family. In terms of assembly, homodimer.

It catalyses the reaction N(2)-succinyl-L-arginine + 2 H2O + 2 H(+) = N(2)-succinyl-L-ornithine + 2 NH4(+) + CO2. The protein operates within amino-acid degradation; L-arginine degradation via AST pathway; L-glutamate and succinate from L-arginine: step 2/5. In terms of biological role, catalyzes the hydrolysis of N(2)-succinylarginine into N(2)-succinylornithine, ammonia and CO(2). The polypeptide is N-succinylarginine dihydrolase (Shewanella woodyi (strain ATCC 51908 / MS32)).